The sequence spans 432 residues: Putative O-antigen transporter (432 aa).

Helical transmembrane passes span 14–34, 47–67, 90–110, 134–154, 164–184, 189–209, 234–254, 271–291, 305–325, 334–354, 376–396, and 400–420; these read IIAA…LVSV, AVFT…IGIG, AAVH…FFLS, FIAS…KILF, IINA…HYLM, ITFA…IYIS, GFLI…IVMS, IFGL…PVCA, IIFL…LFIY, IIAN…LAVY, ILWL…WYFA, and GIVG…FWGL.

The protein localises to the cell inner membrane. Its pathway is bacterial outer membrane biogenesis; LPS O-antigen biosynthesis. May be involved in the translocation process of the nascent O-polysaccharide molecules and/or its ligation to lipid A core units. In Salmonella typhi, this protein is Putative O-antigen transporter (rfbX).